The sequence spans 1050 residues: ATP-dependent DNA helicase MPH1 (1050 aa).

Residues 95–262 (IVQRAFYHNL…EIIDNLNISK (168 aa)) enclose the Helicase ATP-binding domain. 108 to 115 (LPTGLGKT) is an ATP binding site. Positions 210-213 (DEAH) match the DEAH box motif. The region spanning 431–631 (KIEAMMEELD…LIDLKEQNRM (201 aa)) is the Helicase C-terminal domain. 2 disordered regions span residues 493–524 (DESN…AQIN) and 743–821 (DSDE…PPKR). Positions 499 to 508 (KKSKGKRVGK) are enriched in basic residues. The segment covering 786–799 (RTLDQHHSASEERG) has biased composition (basic and acidic residues). Polar residues predominate over residues 800–810 (INSNFSHESNL).

This sequence belongs to the DEAD box helicase family. DEAH subfamily. FANCM sub-subfamily. As to quaternary structure, interacts with the MHF histone-fold complex to form the FANCM-MHF complex.

Its subcellular location is the nucleus. It carries out the reaction ATP + H2O = ADP + phosphate + H(+). Functionally, ATP-dependent DNA helicase involved in DNA damage repair by homologous recombination and in genome maintenance. Capable of unwinding D-loops. Plays a role in limiting crossover recombinants during mitotic DNA double-strand break (DSB) repair. Component of a FANCM-MHF complex which promotes gene conversion at blocked replication forks, probably by reversal of the stalled fork. The sequence is that of ATP-dependent DNA helicase MPH1 from Scheffersomyces stipitis (strain ATCC 58785 / CBS 6054 / NBRC 10063 / NRRL Y-11545) (Yeast).